The chain runs to 393 residues: SH3 domain-binding protein 5-like (393 aa).

Disordered regions lie at residues 1 to 59 (MAEL…LDPR) and 272 to 332 (HARR…DTDT). T13 is modified (phosphothreonine). The segment covering 18–28 (LRPEVVEDEVP) has biased composition (basic and acidic residues). Phosphoserine occurs at positions 30 and 49. Coiled-coil stretches lie at residues 59-140 (RIQE…YERA) and 169-272 (WQEM…EQIH). Gly residues predominate over residues 304–313 (GDSGIEGAEG). Residues 317-332 (EEGSSLGPGPAPDTDT) show a composition bias toward low complexity. A phosphoserine mark is found at S343, S350, S358, S362, and S378. A disordered region spans residues 364–393 (DGQELGTRSGGRRGSDGGVRGGRHQRSVSL). Over residues 384–393 (GGRHQRSVSL) the composition is skewed to basic residues.

Belongs to the SH3BP5 family.

In terms of biological role, functions as a guanine nucleotide exchange factor (GEF) for RAB11A. The sequence is that of SH3 domain-binding protein 5-like (SH3BP5L) from Pongo abelii (Sumatran orangutan).